Here is a 606-residue protein sequence, read N- to C-terminus: Polypeptide N-acetylgalactosaminyltransferase 9 (606 aa).

Topologically, residues 1–6 (MAVARK) are cytoplasmic. Residues 7-29 (IRTLLTVNILVFVGIVLFSVYCR) traverse the membrane as a helical; Signal-anchor for type II membrane protein segment. Topologically, residues 30–606 (LQGRSQELVR…IRNWIKHARH (577 aa)) are lumenal. The segment at 43-62 (GGCRPRPATPAPGSPLRSGG) is disordered. 2 cysteine pairs are disulfide-bonded: Cys-144–Cys-375 and Cys-366–Cys-445. A catalytic subdomain A region spans residues 153–264 (LPQVSVVFIF…TGWAEPALSR (112 aa)). The substrate site is built by Asp-194 and Arg-225. Residues Asp-248, His-250, and His-380 each coordinate Mn(2+). The interval 321-383 (PIRTPAMIGC…PCSRVAHIER (63 aa)) is catalytic subdomain B. Substrate-binding residues include Arg-383 and Tyr-388. Asn-463 is a glycosylation site (N-linked (GlcNAc...) asparagine). The Ricin B-type lectin domain maps to 467-603 (TYGEVRNSKA…KWMIRNWIKH (137 aa)). Cystine bridges form between Cys-480–Cys-496, Cys-528–Cys-543, and Cys-570–Cys-590.

Belongs to the glycosyltransferase 2 family. GalNAc-T subfamily. Mn(2+) is required as a cofactor.

Its subcellular location is the golgi apparatus membrane. The enzyme catalyses L-seryl-[protein] + UDP-N-acetyl-alpha-D-galactosamine = a 3-O-[N-acetyl-alpha-D-galactosaminyl]-L-seryl-[protein] + UDP + H(+). The catalysed reaction is L-threonyl-[protein] + UDP-N-acetyl-alpha-D-galactosamine = a 3-O-[N-acetyl-alpha-D-galactosaminyl]-L-threonyl-[protein] + UDP + H(+). It functions in the pathway protein modification; protein glycosylation. In terms of biological role, catalyzes the initial reaction in O-linked oligosaccharide biosynthesis, the transfer of an N-acetyl-D-galactosamine residue to a serine or threonine residue on the protein receptor. Does not glycosylate apomucin or SDC3. In Macaca fascicularis (Crab-eating macaque), this protein is Polypeptide N-acetylgalactosaminyltransferase 9 (GALNT9).